Here is a 229-residue protein sequence, read N- to C-terminus: 7-cyano-7-deazaguanine synthase (229 aa).

Residue 9 to 19 (YSGGLDSTTCM) participates in ATP binding. Residues cysteine 189, cysteine 199, cysteine 202, and cysteine 205 each coordinate Zn(2+).

This sequence belongs to the QueC family. It depends on Zn(2+) as a cofactor.

It carries out the reaction 7-carboxy-7-deazaguanine + NH4(+) + ATP = 7-cyano-7-deazaguanine + ADP + phosphate + H2O + H(+). It participates in purine metabolism; 7-cyano-7-deazaguanine biosynthesis. Functionally, catalyzes the ATP-dependent conversion of 7-carboxy-7-deazaguanine (CDG) to 7-cyano-7-deazaguanine (preQ(0)). This is 7-cyano-7-deazaguanine synthase from Geotalea daltonii (strain DSM 22248 / JCM 15807 / FRC-32) (Geobacter daltonii).